The following is a 342-amino-acid chain: Tetraacyldisaccharide 4'-kinase (342 aa).

Position 68–75 (68–75 (TVGGTGKT)) interacts with ATP.

It belongs to the LpxK family.

It catalyses the reaction a lipid A disaccharide + ATP = a lipid IVA + ADP + H(+). Its pathway is glycolipid biosynthesis; lipid IV(A) biosynthesis; lipid IV(A) from (3R)-3-hydroxytetradecanoyl-[acyl-carrier-protein] and UDP-N-acetyl-alpha-D-glucosamine: step 6/6. Transfers the gamma-phosphate of ATP to the 4'-position of a tetraacyldisaccharide 1-phosphate intermediate (termed DS-1-P) to form tetraacyldisaccharide 1,4'-bis-phosphate (lipid IVA). In Burkholderia thailandensis (strain ATCC 700388 / DSM 13276 / CCUG 48851 / CIP 106301 / E264), this protein is Tetraacyldisaccharide 4'-kinase.